Here is a 503-residue protein sequence, read N- to C-terminus: ATP synthase subunit alpha (503 aa).

Residue 170-177 (GDKQTGKT) coordinates ATP.

The protein belongs to the ATPase alpha/beta chains family. F-type ATPases have 2 components, CF(1) - the catalytic core - and CF(0) - the membrane proton channel. CF(1) has five subunits: alpha(3), beta(3), gamma(1), delta(1), epsilon(1). CF(0) has three main subunits: a(1), b(2) and c(9-12). The alpha and beta chains form an alternating ring which encloses part of the gamma chain. CF(1) is attached to CF(0) by a central stalk formed by the gamma and epsilon chains, while a peripheral stalk is formed by the delta and b chains.

It localises to the cell inner membrane. It catalyses the reaction ATP + H2O + 4 H(+)(in) = ADP + phosphate + 5 H(+)(out). Functionally, produces ATP from ADP in the presence of a proton gradient across the membrane. The alpha chain is a regulatory subunit. The protein is ATP synthase subunit alpha of Helicobacter pylori (strain G27).